A 504-amino-acid chain; its full sequence is Cytochrome P450 3A16 (504 aa).

Residue cysteine 443 coordinates heme.

It belongs to the cytochrome P450 family. Heme serves as cofactor.

It is found in the endoplasmic reticulum membrane. The protein localises to the microsome membrane. It catalyses the reaction an organic molecule + reduced [NADPH--hemoprotein reductase] + O2 = an alcohol + oxidized [NADPH--hemoprotein reductase] + H2O + H(+). Functionally, cytochromes P450 are a group of heme-thiolate monooxygenases. In liver microsomes, this enzyme is involved in an NADPH-dependent electron transport pathway. It oxidizes a variety of structurally unrelated compounds, including steroids, fatty acids, and xenobiotics. This Mus musculus (Mouse) protein is Cytochrome P450 3A16 (Cyp3a16).